Consider the following 178-residue polypeptide: Large ribosomal subunit protein uL6 (178 aa).

It belongs to the universal ribosomal protein uL6 family. Part of the 50S ribosomal subunit.

Functionally, this protein binds to the 23S rRNA, and is important in its secondary structure. It is located near the subunit interface in the base of the L7/L12 stalk, and near the tRNA binding site of the peptidyltransferase center. The polypeptide is Large ribosomal subunit protein uL6 (Helicobacter pylori (strain Shi470)).